A 199-amino-acid polypeptide reads, in one-letter code: Urease accessory protein UreG (199 aa).

Residue 8-15 coordinates GTP; that stretch reads GPVGSGKT.

Belongs to the SIMIBI class G3E GTPase family. UreG subfamily. In terms of assembly, homodimer. UreH, UreF and UreG form a complex that acts as a GTP-hydrolysis-dependent molecular chaperone, activating the urease apoprotein by helping to assemble the nickel containing metallocenter of UreC. The UreE protein probably delivers the nickel.

It is found in the cytoplasm. Functionally, facilitates the functional incorporation of the urease nickel metallocenter. This process requires GTP hydrolysis, probably effectuated by UreG. The sequence is that of Urease accessory protein UreG from Helicobacter pylori (strain P12).